Here is a 437-residue protein sequence, read N- to C-terminus: Glutamate-1-semialdehyde 2,1-aminomutase (437 aa).

Residue Lys273 is modified to N6-(pyridoxal phosphate)lysine.

It belongs to the class-III pyridoxal-phosphate-dependent aminotransferase family. HemL subfamily. In terms of assembly, homodimer. Pyridoxal 5'-phosphate is required as a cofactor.

The protein resides in the cytoplasm. The enzyme catalyses (S)-4-amino-5-oxopentanoate = 5-aminolevulinate. Its pathway is porphyrin-containing compound metabolism; protoporphyrin-IX biosynthesis; 5-aminolevulinate from L-glutamyl-tRNA(Glu): step 2/2. The polypeptide is Glutamate-1-semialdehyde 2,1-aminomutase (Chlamydia felis (strain Fe/C-56) (Chlamydophila felis)).